A 226-amino-acid polypeptide reads, in one-letter code: uncharacterized protein (226 aa).

The first 18 residues, 1–18, serve as a signal peptide directing secretion; the sequence is MRRIGLCISLLVTVLVMS.

This is an uncharacterized protein from Bacillus subtilis (strain 168).